A 316-amino-acid polypeptide reads, in one-letter code: Small ribosomal subunit biogenesis GTPase RsgA (316 aa).

The 166-residue stretch at Asp83–Phe248 folds into the CP-type G domain. GTP-binding positions include Asn131–Asp134 and Gly185–Thr193. 4 residues coordinate Zn(2+): Cys272, Cys277, His279, and Cys285.

This sequence belongs to the TRAFAC class YlqF/YawG GTPase family. RsgA subfamily. In terms of assembly, monomer. Associates with 30S ribosomal subunit, binds 16S rRNA. It depends on Zn(2+) as a cofactor.

It is found in the cytoplasm. Its function is as follows. One of several proteins that assist in the late maturation steps of the functional core of the 30S ribosomal subunit. Helps release RbfA from mature subunits. May play a role in the assembly of ribosomal proteins into the subunit. Circularly permuted GTPase that catalyzes slow GTP hydrolysis, GTPase activity is stimulated by the 30S ribosomal subunit. The sequence is that of Small ribosomal subunit biogenesis GTPase RsgA from Paraburkholderia phytofirmans (strain DSM 17436 / LMG 22146 / PsJN) (Burkholderia phytofirmans).